Consider the following 119-residue polypeptide: Ribonuclease P protein component (119 aa).

Belongs to the RnpA family. Consists of a catalytic RNA component (M1 or rnpB) and a protein subunit.

It carries out the reaction Endonucleolytic cleavage of RNA, removing 5'-extranucleotides from tRNA precursor.. RNaseP catalyzes the removal of the 5'-leader sequence from pre-tRNA to produce the mature 5'-terminus. It can also cleave other RNA substrates such as 4.5S RNA. The protein component plays an auxiliary but essential role in vivo by binding to the 5'-leader sequence and broadening the substrate specificity of the ribozyme. This chain is Ribonuclease P protein component, found in Streptococcus pyogenes serotype M1.